The primary structure comprises 71 residues: uncharacterized protein (71 aa).

This is an uncharacterized protein from Thermoproteus tenax virus 1 (strain KRA1) (TTV1).